A 195-amino-acid chain; its full sequence is Large ribosomal subunit protein eL15 (195 aa).

Positions 174 to 195 (GHGRLGSAKSRPSIRANGRLRR) are disordered.

The protein belongs to the eukaryotic ribosomal protein eL15 family.

This is Large ribosomal subunit protein eL15 from Picrophilus torridus (strain ATCC 700027 / DSM 9790 / JCM 10055 / NBRC 100828 / KAW 2/3).